We begin with the raw amino-acid sequence, 519 residues long: B3 domain-containing protein Os03g0620400 (519 aa).

Positions 26-119 form a DNA-binding region, TF-B3 1; that stretch reads MKCFHLQMSA…RFEVLILDSD (94 aa). A disordered region spans residues 138-218; it reads ERNAAPVDIS…DPQMPPGRNY (81 aa). Acidic residues predominate over residues 189–209; sequence SGEEGTDSSTSEDESSYELDD. 2 consecutive DNA-binding regions (TF-B3) follow at residues 249–349 and 416–516; these read VAIM…LRET and YVSI…IRRN.

Its subcellular location is the nucleus. The chain is B3 domain-containing protein Os03g0620400 from Oryza sativa subsp. japonica (Rice).